The primary structure comprises 85 residues: Large ribosomal subunit protein bL31B (85 aa).

Belongs to the bacterial ribosomal protein bL31 family. Type B subfamily. In terms of assembly, part of the 50S ribosomal subunit.

This Staphylococcus saprophyticus subsp. saprophyticus (strain ATCC 15305 / DSM 20229 / NCIMB 8711 / NCTC 7292 / S-41) protein is Large ribosomal subunit protein bL31B.